Here is a 356-residue protein sequence, read N- to C-terminus: Dual-specificity RNA methyltransferase RlmN (356 aa).

Catalysis depends on glutamate 89, which acts as the Proton acceptor. The 234-residue stretch at 108 to 341 folds into the Radical SAM core domain; that stretch reads SHARYTICVS…CTIRESKGLD (234 aa). Cysteines 115 and 346 form a disulfide. [4Fe-4S] cluster-binding residues include cysteine 122, cysteine 126, and cysteine 129. S-adenosyl-L-methionine-binding positions include 172 to 173, serine 204, 227 to 229, and asparagine 303; these read GE and SLH. The S-methylcysteine intermediate role is filled by cysteine 346.

This sequence belongs to the radical SAM superfamily. RlmN family. [4Fe-4S] cluster is required as a cofactor.

The protein localises to the cytoplasm. The catalysed reaction is adenosine(2503) in 23S rRNA + 2 reduced [2Fe-2S]-[ferredoxin] + 2 S-adenosyl-L-methionine = 2-methyladenosine(2503) in 23S rRNA + 5'-deoxyadenosine + L-methionine + 2 oxidized [2Fe-2S]-[ferredoxin] + S-adenosyl-L-homocysteine. It catalyses the reaction adenosine(37) in tRNA + 2 reduced [2Fe-2S]-[ferredoxin] + 2 S-adenosyl-L-methionine = 2-methyladenosine(37) in tRNA + 5'-deoxyadenosine + L-methionine + 2 oxidized [2Fe-2S]-[ferredoxin] + S-adenosyl-L-homocysteine. Its function is as follows. Specifically methylates position 2 of adenine 2503 in 23S rRNA and position 2 of adenine 37 in tRNAs. m2A2503 modification seems to play a crucial role in the proofreading step occurring at the peptidyl transferase center and thus would serve to optimize ribosomal fidelity. In Campylobacter jejuni subsp. jejuni serotype O:23/36 (strain 81-176), this protein is Dual-specificity RNA methyltransferase RlmN.